The sequence spans 557 residues: Formate--tetrahydrofolate ligase 2 (557 aa).

66–73 provides a ligand contact to ATP; sequence TPAGEGKT.

The protein belongs to the formate--tetrahydrofolate ligase family.

The enzyme catalyses (6S)-5,6,7,8-tetrahydrofolate + formate + ATP = (6R)-10-formyltetrahydrofolate + ADP + phosphate. It functions in the pathway one-carbon metabolism; tetrahydrofolate interconversion. This chain is Formate--tetrahydrofolate ligase 2, found in Streptococcus pyogenes serotype M4 (strain MGAS10750).